We begin with the raw amino-acid sequence, 774 residues long: Penicillin acylase 2 proenzyme (774 aa).

Residue serine 240 is the Nucleophile of the active site.

This sequence belongs to the peptidase S45 family. Heterodimer of a small subunit and a large subunit processed from the same precursor.

The catalysed reaction is a penicillin + H2O = 6-aminopenicillanate + a carboxylate. The sequence is that of Penicillin acylase 2 proenzyme (acyII) from Pseudomonas sp. (strain SE83).